Reading from the N-terminus, the 329-residue chain is Microtubule-associated protein RP/EB family member 1C (329 aa).

The Calponin-homology (CH) domain occupies 13–115; the sequence is FVGRSEILAW…FMQWMKKYCD (103 aa). The segment covering 130 to 141 has biased composition (basic and acidic residues); the sequence is REASKGGKEATK. A disordered region spans residues 130 to 203; the sequence is REASKGGKEA…SAKQSKPVPA (74 aa). Low complexity predominate over residues 174–185; the sequence is SNNTGTHHSSTG. The EB1 C-terminal domain maps to 193–263; that stretch reads PSAKQSKPVP…LYAADGEDVG (71 aa). Positions 289 to 311 are required for nuclear localization; it reads KRKLIVNLDVDVAAITTLSPRQR.

Belongs to the MAPRE family. As to quaternary structure, homodimer. As to expression, highly expressed in the root and shoot meristems, in guard cells of leaf stomata, pollen grains and pollen tubes.

The protein localises to the nucleus. The protein resides in the cytoplasm. It localises to the cytoskeleton. Its subcellular location is the spindle. It is found in the phragmoplast. Its function is as follows. Plant-specific EB1 subtype that functions preferentially at early stages of plant mitosis by regulating spindle positioning and chromosome segregation. Accumulates in the prophase nucleus and is required to maintain spindle bipolarity during premetaphase and/or metaphase and for efficient segregation of chromosomes at anaphase. May play a role in the dynamics of microtubule network in elongating pollen tubes. The chain is Microtubule-associated protein RP/EB family member 1C (EB1C) from Arabidopsis thaliana (Mouse-ear cress).